A 239-amino-acid chain; its full sequence is LexA repressor (239 aa).

A DNA-binding region (H-T-H motif) is located at residues 26–46; the sequence is FDEMKDALDLASKSGIHRLIT. Residues 80 to 108 are disordered; that stretch reads RRGFSPSVIEGSLGKPQPAAAPAPAKPVA. Catalysis depends on for autocatalytic cleavage activity residues Ser159 and Lys197.

It belongs to the peptidase S24 family. In terms of assembly, homodimer.

It catalyses the reaction Hydrolysis of Ala-|-Gly bond in repressor LexA.. Its function is as follows. Represses a number of genes involved in the response to DNA damage (SOS response), including recA and lexA. In the presence of single-stranded DNA, RecA interacts with LexA causing an autocatalytic cleavage which disrupts the DNA-binding part of LexA, leading to derepression of the SOS regulon and eventually DNA repair. This chain is LexA repressor, found in Rhizobium leguminosarum bv. trifolii (strain WSM2304).